Here is a 161-residue protein sequence, read N- to C-terminus: UPF0303 protein Spro_1996 (161 aa).

It belongs to the UPF0303 family.

The chain is UPF0303 protein Spro_1996 from Serratia proteamaculans (strain 568).